The chain runs to 159 residues: Ribosomal RNA large subunit methyltransferase H (159 aa).

S-adenosyl-L-methionine contacts are provided by residues leucine 76, glycine 108, and 127 to 132; that span reads FGLLTF.

The protein belongs to the RNA methyltransferase RlmH family. As to quaternary structure, homodimer.

It localises to the cytoplasm. It carries out the reaction pseudouridine(1915) in 23S rRNA + S-adenosyl-L-methionine = N(3)-methylpseudouridine(1915) in 23S rRNA + S-adenosyl-L-homocysteine + H(+). Specifically methylates the pseudouridine at position 1915 (m3Psi1915) in 23S rRNA. In Streptococcus thermophilus (strain CNRZ 1066), this protein is Ribosomal RNA large subunit methyltransferase H.